The sequence spans 256 residues: Type III pantothenate kinase (256 aa).

6 to 13 (DVGNSHIY) lines the ATP pocket. Substrate-binding positions include tyrosine 99 and 106-109 (GADR). Residue aspartate 108 is the Proton acceptor of the active site. Aspartate 129 lines the K(+) pocket. Residue threonine 132 coordinates ATP. Threonine 184 lines the substrate pocket.

Belongs to the type III pantothenate kinase family. As to quaternary structure, homodimer. It depends on NH4(+) as a cofactor. K(+) serves as cofactor.

Its subcellular location is the cytoplasm. It carries out the reaction (R)-pantothenate + ATP = (R)-4'-phosphopantothenate + ADP + H(+). It functions in the pathway cofactor biosynthesis; coenzyme A biosynthesis; CoA from (R)-pantothenate: step 1/5. Catalyzes the phosphorylation of pantothenate (Pan), the first step in CoA biosynthesis. This chain is Type III pantothenate kinase, found in Legionella pneumophila (strain Corby).